The chain runs to 163 residues: Probable ribosome biogenesis protein RLP24 (163 aa).

The protein belongs to the eukaryotic ribosomal protein eL24 family. In terms of assembly, associated with nucleolar and cytoplasmic pre-60S particles. At the end of biogenesis it dissociates from cytoplasmic pre-60S particles and is likely to be exchanged for its ribosomal homolog, RPL24.

The protein resides in the nucleus. It is found in the nucleolus. Involved in the biogenesis of the 60S ribosomal subunit. Ensures the docking of GTPBP4/NOG1 to pre-60S particles. This Bos taurus (Bovine) protein is Probable ribosome biogenesis protein RLP24 (RSL24D1).